Here is a 133-residue protein sequence, read N- to C-terminus: MYPENYKRFLELIDKLREFEGALIVEGLRDEVALRNLGVRAEIIRLSRLPLSEVALIASSHKEVMILTDFDKKGEELAKKLLNYLAGYPCSVDIETWKELRKLVRKDIKGVEDLYGLYLRVVSVSDPLLEGIQ.

Positions 20 to 100 constitute a Toprim domain; the sequence is EGALIVEGLR…SVDIETWKEL (81 aa). Residues Glu-26, Asp-69, and Asp-71 each contribute to the Mg(2+) site.

It belongs to the UPF0292 family. Mg(2+) serves as cofactor.

The chain is UPF0292 protein TK1411 from Thermococcus kodakarensis (strain ATCC BAA-918 / JCM 12380 / KOD1) (Pyrococcus kodakaraensis (strain KOD1)).